Consider the following 86-residue polypeptide: UPF0457 protein SAUSA300_2132 (86 aa).

It belongs to the UPF0457 family.

The polypeptide is UPF0457 protein SAUSA300_2132 (Staphylococcus aureus (strain USA300)).